A 246-amino-acid chain; its full sequence is DNA repair protein RecO (246 aa).

The protein belongs to the RecO family.

In terms of biological role, involved in DNA repair and RecF pathway recombination. This is DNA repair protein RecO from Methylorubrum extorquens (strain PA1) (Methylobacterium extorquens).